A 330-amino-acid polypeptide reads, in one-letter code: Glycerol-3-phosphate dehydrogenase [NAD(P)+] (330 aa).

NADPH contacts are provided by Trp-11, Arg-33, and Lys-105. Lys-105, Gly-133, and Ser-135 together coordinate sn-glycerol 3-phosphate. Residue Ala-137 coordinates NADPH. The sn-glycerol 3-phosphate site is built by Lys-188, Asp-241, Ser-251, Arg-252, and Asn-253. Lys-188 serves as the catalytic Proton acceptor. Arg-252 is an NADPH binding site. Val-276 and Glu-278 together coordinate NADPH.

Belongs to the NAD-dependent glycerol-3-phosphate dehydrogenase family.

The protein resides in the cytoplasm. The catalysed reaction is sn-glycerol 3-phosphate + NAD(+) = dihydroxyacetone phosphate + NADH + H(+). It carries out the reaction sn-glycerol 3-phosphate + NADP(+) = dihydroxyacetone phosphate + NADPH + H(+). It functions in the pathway membrane lipid metabolism; glycerophospholipid metabolism. Its function is as follows. Catalyzes the reduction of the glycolytic intermediate dihydroxyacetone phosphate (DHAP) to sn-glycerol 3-phosphate (G3P), the key precursor for phospholipid synthesis. The polypeptide is Glycerol-3-phosphate dehydrogenase [NAD(P)+] (Acidovorax sp. (strain JS42)).